A 142-amino-acid polypeptide reads, in one-letter code: uncharacterized protein (142 aa).

In terms of domain architecture, Peptidase C39 spans 18-137 (QSRSYSCGPA…RIFTGNVLVV (120 aa)).

This is an uncharacterized protein from Methanothermobacter thermautotrophicus (strain ATCC 29096 / DSM 1053 / JCM 10044 / NBRC 100330 / Delta H) (Methanobacterium thermoautotrophicum).